A 106-amino-acid polypeptide reads, in one-letter code: YLFLFRFIGVDTLRRSKPPIRLNTLIPVAKVFGANFSFASLRLEILIFSGLTGWNSKSKASHVYSSSVGYSSNSIASLSIIVSNTSSRNGSWISTNRTPICLSPIV.

The protein localises to the mitochondrion. This is an uncharacterized protein from Claviceps purpurea (Ergot fungus).